The sequence spans 356 residues: Protein translocase subunit SecY (356 aa).

8 consecutive transmembrane segments (helical) span residues 24 to 44 (LFVIGALIVFRIGSFIPIPGI), 77 to 97 (IFALGIMPYISASIIIQLLTV), 125 to 145 (LVLAIFQSIGIATGLPNMPGM), 154 to 174 (FAFYFTAVVSLVTGTMFLMWL), 183 to 203 (IGNGISIIIFAGIVAGLPPAV), 217 to 237 (FLLLLLVAVLVFAVTFFVVFI), 274 to 294 (VIPAIFASSIILFPATIASWF), and 317 to 337 (YVLLYASAIIFFCFFYTALVF).

This sequence belongs to the SecY/SEC61-alpha family. In terms of assembly, component of the Sec protein translocase complex. Heterotrimer consisting of SecY, SecE and SecG subunits. The heterotrimers can form oligomers, although 1 heterotrimer is thought to be able to translocate proteins. Interacts with the ribosome. Interacts with SecDF, and other proteins may be involved. Interacts with SecA.

It is found in the cell membrane. Functionally, the central subunit of the protein translocation channel SecYEG. Consists of two halves formed by TMs 1-5 and 6-10. These two domains form a lateral gate at the front which open onto the bilayer between TMs 2 and 7, and are clamped together by SecE at the back. The channel is closed by both a pore ring composed of hydrophobic SecY resides and a short helix (helix 2A) on the extracellular side of the membrane which forms a plug. The plug probably moves laterally to allow the channel to open. The ring and the pore may move independently. This Buchnera aphidicola subsp. Acyrthosiphon kondoi (Acyrthosiphon kondoi symbiotic bacterium) protein is Protein translocase subunit SecY.